A 182-amino-acid chain; its full sequence is Lipid A acyltransferase PagP (182 aa).

Positions 1-21 (MTQYFRSLAFFLLPVPATAMA) are cleaved as a signal peptide. The N-palmitoyl cysteine moiety is linked to residue Cys-22. Residue Cys-22 is the site of S-diacylglycerol cysteine attachment. Active-site residues include His-55, Asp-98, and Ser-99.

Belongs to the lipid A palmitoyltransferase family. In terms of assembly, homodimer.

It localises to the cell outer membrane. It catalyses the reaction a lipid A + a 1,2-diacyl-sn-glycero-3-phosphocholine = a hepta-acyl lipid A + a 2-acyl-sn-glycero-3-phosphocholine. The catalysed reaction is a lipid IVA + a 1,2-diacyl-sn-glycero-3-phosphocholine = a lipid IVB + a 2-acyl-sn-glycero-3-phosphocholine. It carries out the reaction a lipid IIA + a 1,2-diacyl-sn-glycero-3-phosphocholine = a lipid IIB + a 2-acyl-sn-glycero-3-phosphocholine. Its function is as follows. Transfers a fatty acid residue from the sn-1 position of a phospholipid to the N-linked hydroxyfatty acid chain on the proximal unit of lipid A or its precursors. In Bordetella pertussis (strain CS), this protein is Lipid A acyltransferase PagP.